Reading from the N-terminus, the 664-residue chain is Intraflagellar transport protein 70B (664 aa).

TPR repeat units lie at residues 11–44, 45–78, 153–186, 188–220, 385–418, 423–456, and 458–491; these read DGEFTAVVYRLIRDARYAEAVQLLGGELQRSPRS, RAGLSLLGYCYYRLQEFALAAECYEQLGQLHPEL, LDGQVNLGCLLYKEGHYEAACSKFSAALQASGYR, DLSYNLALAYYSSRHYALALKHIADIIEHGIRQ, LTEQLRKLTIQVQEARHNKDDEAVKKAVNEYEDT, IPVLMAQAKIYWNLENYPMVEKLFRKSVEFCNDH, and VWKLNVAHVLFMQENKYKEAIGFYEPIVKKHYDN. The stretch at 509-532 forms a coiled coil; it reads MISQNEEAEELMRKIGKEEEQLSY. The stretch at 543 to 576 is one TPR 8 repeat; that stretch reads CIVNLVIGTLYCAKGNYDFGISRVIKSLEPCNKK.

Belongs to the TTC30/dfy-1/fleer family. As to quaternary structure, interacts with the IFT B complex components IFT27, IFT46, IFT74, IFT52, IFT57, IFT80, IFT81 and IFT88. Interacts with KIF17.

It is found in the cell projection. The protein localises to the cilium. In terms of biological role, required for polyglutamylation of axonemal tubulin. Plays a role in anterograde intraflagellar transport (IFT), the process by which cilia precursors are transported from the base of the cilium to the site of their incorporation at the tip. The protein is Intraflagellar transport protein 70B (IFT70B) of Bos taurus (Bovine).